Reading from the N-terminus, the 136-residue chain is uncharacterized protein (136 aa).

2 disordered regions span residues 58–82 and 112–136; these read TSDDDEKPGNSKIKSHTDQPPTTQT and NNPKIKTNNPNEEFENTGADSVVTQ.

This is an uncharacterized protein from Dictyostelium discoideum (Social amoeba).